The following is a 249-amino-acid chain: Probable transcriptional regulatory protein LIC_12886 (249 aa).

Belongs to the TACO1 family.

It localises to the cytoplasm. This is Probable transcriptional regulatory protein LIC_12886 from Leptospira interrogans serogroup Icterohaemorrhagiae serovar copenhageni (strain Fiocruz L1-130).